The following is a 190-amino-acid chain: Vascular endothelial growth factor A (190 aa).

The N-terminal stretch at 1–26 is a signal peptide; that stretch reads MNFLLSWVHWSLALLLYLHHAKWSQA. Disulfide bonds link Cys51–Cys93, Cys82–Cys127, and Cys86–Cys129. N-linked (GlcNAc...) asparagine glycosylation occurs at Asn100.

It belongs to the PDGF/VEGF growth factor family. Homodimer; disulfide-linked. Also found as heterodimer with PGF. Interacts with NRP1. Interacts with BSG. Interacts with CD82; this interaction inhibits VEGFA-mediated signaling pathway.

It is found in the secreted. In terms of biological role, growth factor active in angiogenesis, vasculogenesis and endothelial cell growth. Induces endothelial cell proliferation, promotes cell migration, inhibits apoptosis and induces permeabilization of blood vessels. Binds to the FLT1/VEGFR1 and KDR/VEGFR2 receptors, heparan sulfate and heparin. Binding to NRP1 receptor initiates a signaling pathway needed for motor neuron axon guidance and cell body migration, including for the caudal migration of facial motor neurons from rhombomere 4 to rhombomere 6 during embryonic development. Also binds the DEAR/FBXW7-AS1 receptor. This Sus scrofa (Pig) protein is Vascular endothelial growth factor A (VEGFA).